The primary structure comprises 89 residues: Small ribosomal subunit protein uS15 (89 aa).

This sequence belongs to the universal ribosomal protein uS15 family. In terms of assembly, part of the 30S ribosomal subunit. Forms a bridge to the 50S subunit in the 70S ribosome, contacting the 23S rRNA.

Its function is as follows. One of the primary rRNA binding proteins, it binds directly to 16S rRNA where it helps nucleate assembly of the platform of the 30S subunit by binding and bridging several RNA helices of the 16S rRNA. In terms of biological role, forms an intersubunit bridge (bridge B4) with the 23S rRNA of the 50S subunit in the ribosome. The protein is Small ribosomal subunit protein uS15 of Thiobacillus denitrificans (strain ATCC 25259 / T1).